Here is an 850-residue protein sequence, read N- to C-terminus: Mitogen-activated protein kinase kinase kinase 11 (850 aa).

A Phosphoserine modification is found at S11. The tract at residues 16–35 is disordered; it reads WNGSGSGGGGGTGGVRPEGS. A compositionally biased stretch (gly residues) spans 17-31; that stretch reads NGSGSGGGGGTGGVR. S35 is modified (phosphoserine). One can recognise an SH3 domain in the interval 42 to 106; it reads YANPVWTALF…PSNYVSRGGG (65 aa). Residues 118 to 380 enclose the Protein kinase domain; it reads LRLEEVIGIG…ASILQQLEAL (263 aa). ATP is bound by residues 124–132 and K145; that span reads IGIGGFGKV. D242 acts as the Proton acceptor in catalysis. At T278 the chain carries Phosphothreonine; by autocatalysis. S282 is modified (phosphoserine; by autocatalysis and MAP4K1). Residue S395 is modified to Phosphoserine. Leucine-zipper regions lie at residues 404 to 425 and 439 to 460; these read IQGL…EEEL and LRRR…ELTL. S508 and S525 each carry phosphoserine. The interval 535–644 is disordered; sequence QLEPTESGQT…SSGTPKLIQR (110 aa). Over residues 538-547 the composition is skewed to polar residues; sequence PTESGQTWGR. Phosphoserine occurs at positions 549, 556, and 557. The segment covering 551–563 has biased composition (basic and acidic residues); that stretch reads RRLEDSSNGERRA. Over residues 598–610 the composition is skewed to low complexity; it reads SSPLGSPSTPPAL. Position 655 is a phosphoserine (S655). The tract at residues 657–850 is disordered; it reads GLGRDLQPPG…QAPWAPEAGP (194 aa). Residues 677–693 are compositionally biased toward pro residues; it reads TAPPPAQMPSPCPPELP. The segment covering 700-711 has biased composition (polar residues); that stretch reads LSQTTPDAHSSP. S709 carries the phosphoserine modification. T712 is modified (phosphothreonine). 9 positions are modified to phosphoserine: S728, S731, S743, S751, S761, S773, S792, S796, and S818. A compositionally biased stretch (low complexity) spans 763 to 776; sequence PLGLISRPRPSPLR. Pro residues predominate over residues 790 to 802; the sequence is RPSPLPSPQPAPR. The segment covering 803–819 has biased composition (low complexity); the sequence is RAPWTLFPDSDPFWDSP.

Belongs to the protein kinase superfamily. STE Ser/Thr protein kinase family. MAP kinase kinase kinase subfamily. Homodimer; undergoes dimerization during activation. Interacts with MAP2K4/MKK4 and MAP2K7/MKK7. Found in a complex with SH3RF1, RAC1, MAP2K7/MKK7, MAPK8IP1/JIP1 and MAPK8/JNK1. The cofactor is Mg(2+). In terms of processing, autophosphorylation on serine and threonine residues within the activation loop plays a role in enzyme activation. Thr-278 is likely to be the main autophosphorylation site. Phosphorylation of Ser-556 and Ser-557 is induced by CDC42.

It localises to the cytoplasm. The protein resides in the cytoskeleton. The protein localises to the microtubule organizing center. Its subcellular location is the centrosome. The catalysed reaction is L-seryl-[protein] + ATP = O-phospho-L-seryl-[protein] + ADP + H(+). It carries out the reaction L-threonyl-[protein] + ATP = O-phospho-L-threonyl-[protein] + ADP + H(+). Its activity is regulated as follows. Homodimerization via the leucine zipper domains is required for autophosphorylation and subsequent activation. In terms of biological role, activates the JUN N-terminal pathway. Required for serum-stimulated cell proliferation and for mitogen and cytokine activation of MAPK14 (p38), MAPK3 (ERK) and MAPK8 (JNK1) through phosphorylation and activation of MAP2K4/MKK4 and MAP2K7/MKK7. Plays a role in mitogen-stimulated phosphorylation and activation of BRAF, but does not phosphorylate BRAF directly. Influences microtubule organization during the cell cycle. The sequence is that of Mitogen-activated protein kinase kinase kinase 11 (Map3k11) from Mus musculus (Mouse).